The chain runs to 442 residues: tRNA modification GTPase MnmE (442 aa).

Residues Arg24, Glu82, and Lys120 each contribute to the (6S)-5-formyl-5,6,7,8-tetrahydrofolate site. The TrmE-type G domain occupies 217–367 (GLHIVITGEP…LISLIKKKAE (151 aa)). GTP is bound by residues 227–232 (NVGKST), 246–252 (SEYAGTT), and 271–274 (DTAG). Ser231 lines the Mg(2+) pocket. Ser246 contributes to the K(+) binding site. Thr252 is a Mg(2+) binding site. A (6S)-5-formyl-5,6,7,8-tetrahydrofolate-binding site is contributed by Lys442.

It belongs to the TRAFAC class TrmE-Era-EngA-EngB-Septin-like GTPase superfamily. TrmE GTPase family. As to quaternary structure, homodimer. Heterotetramer of two MnmE and two MnmG subunits. Requires K(+) as cofactor.

It localises to the cytoplasm. Its function is as follows. Exhibits a very high intrinsic GTPase hydrolysis rate. Involved in the addition of a carboxymethylaminomethyl (cmnm) group at the wobble position (U34) of certain tRNAs, forming tRNA-cmnm(5)s(2)U34. The polypeptide is tRNA modification GTPase MnmE (Wolbachia pipientis subsp. Culex pipiens (strain wPip)).